We begin with the raw amino-acid sequence, 247 residues long: Pyridoxine 5'-phosphate synthase (247 aa).

Residue N12 participates in 3-amino-2-oxopropyl phosphate binding. A 1-deoxy-D-xylulose 5-phosphate-binding site is contributed by 14-15 (DH). R23 is a binding site for 3-amino-2-oxopropyl phosphate. The active-site Proton acceptor is H48. 1-deoxy-D-xylulose 5-phosphate contacts are provided by R50 and H55. The active-site Proton acceptor is the E75. Residue T105 coordinates 1-deoxy-D-xylulose 5-phosphate. H196 acts as the Proton donor in catalysis. Residues G197 and 218 to 219 (GH) each bind 3-amino-2-oxopropyl phosphate.

Belongs to the PNP synthase family. In terms of assembly, homooctamer; tetramer of dimers.

The protein resides in the cytoplasm. It catalyses the reaction 3-amino-2-oxopropyl phosphate + 1-deoxy-D-xylulose 5-phosphate = pyridoxine 5'-phosphate + phosphate + 2 H2O + H(+). The protein operates within cofactor biosynthesis; pyridoxine 5'-phosphate biosynthesis; pyridoxine 5'-phosphate from D-erythrose 4-phosphate: step 5/5. Its function is as follows. Catalyzes the complicated ring closure reaction between the two acyclic compounds 1-deoxy-D-xylulose-5-phosphate (DXP) and 3-amino-2-oxopropyl phosphate (1-amino-acetone-3-phosphate or AAP) to form pyridoxine 5'-phosphate (PNP) and inorganic phosphate. The polypeptide is Pyridoxine 5'-phosphate synthase (Pseudomonas fluorescens (strain Pf0-1)).